The following is a 931-amino-acid chain: Myocardin-related transcription factor A (931 aa).

The segment at 1-256 (MPPLKSPAAF…KQDRGAPPMD (256 aa)) is mediates interaction with SCAI and ACTB. At serine 6 the chain carries Phosphoserine. The segment at 6–23 (SPAAFHEQRRSLERARTE) is intervening spacer sequence 1. Residues 24–49 (DYLKRKIRSRPERSELVRMHILEETS) form an RPEL 1 repeat. Residues 27–65 (KRKIRSRPERSELVRMHILEETSAEPSLQAKQLKLKRAR) carry the Bipartite Nuclear localization signal motif. An intervening spacer sequence 2 region spans residues 50–67 (AEPSLQAKQLKLKRARLA). One copy of the RPEL 2 repeat lies at 68–93 (DDLNEKIAQRPGPMELVEKNILPVES). Disordered regions lie at residues 110–256 (ADSS…PPMD) and 290–344 (PAPP…GALP). Serine 124, serine 139, and serine 156 each carry phosphoserine. Residues 151-162 (SATSASPTQVVS) show a composition bias toward polar residues. The segment covering 180 to 189 (PPLPPPPLLP) has biased composition (pro residues). The span at 191–215 (SLTNGTTIPTAKSTPTLIKQSQPKS) shows a compositional bias: polar residues. Residues 216–231 (ASEKSQRSKKAKELKP) are compositionally biased toward basic and acidic residues. Phosphothreonine is present on threonine 305. A phosphoserine mark is found at serine 310 and serine 312. Over residues 310 to 320 (SLSTTNSSSSS) the composition is skewed to low complexity. Threonine 313 carries the post-translational modification Phosphothreonine. 3 positions are modified to phosphoserine: serine 317, serine 320, and serine 333. In terms of domain architecture, SAP spans 347–381 (LDDMKVAELKQELKLRSLPVSGTKTELIERLRAYQ). 2 positions are modified to phosphoserine: serine 385 and serine 446. The interval 444-476 (FGSTGSTPPVSPTPSERSLLSTGDENSTPGDTF) is disordered. Threonine 447 is modified (phosphothreonine). Serine 449 bears the Phosphoserine mark. The residue at position 450 (threonine 450) is a Phosphothreonine. Phosphoserine is present on serine 454. The residue at position 456 (threonine 456) is a Phosphothreonine. Serine 458 bears the Phosphoserine mark. Residues 459–473 (ERSLLSTGDENSTPG) show a composition bias toward polar residues. Serine 482, serine 492, serine 507, and serine 511 each carry phosphoserine. Residues 515–563 (RAELEGRDKDQMLQEKDKQIEALTRMLRQKQQLVERLKLQLEQEKRAQQ) are a coiled coil. Disordered regions lie at residues 558 to 577 (EKRA…PVKQ), 674 to 746 (KNAD…SSSQ), and 763 to 816 (ADFK…RLED). Residues 678–694 (SPGLSSGSPQQPSSQPG) are compositionally biased toward low complexity. Serine 685, serine 691, and serine 695 each carry phosphoserine. A compositionally biased stretch (polar residues) spans 732–746 (MSQQPKQQENGSSSQ). The span at 763 to 778 (ADFKEPPSLPGKEKPS) shows a compositional bias: basic and acidic residues. Residues 784–799 (GSPLAAQPSPSAELPQ) show a composition bias toward low complexity. Phosphoserine occurs at positions 792, 807, and 859.

Interacts with SRF, forming the SRF-MRTFA nuclear complex which binds the 5'-CArG-3' consensus motif (CArG box) on DNA via SRF. Interacts (via RPEL repeats) with globular actin (G-actin), thereby regulating its subcellular location and activity of the complex formed with SRF. Either forms a trivalent (by binding three G-actin monomers) or pentavalent (by binding five G-actin monomers) complex with G-actin. Forms a nuclear ternary complex with SCAI and SRF, leading to suppress MRTFA-induced SRF transcriptional activity. Interacts with beta-actin (ACTB); interaction with ACTB prevents interaction with SCAI. Interacts with MRTFB. Post-translationally, phosphorylation at Ser-6 by Erk inhibits binding of globular actin (G-actin), unmasking the nuclear localization signal (NLS) and promoting nuclear import. Ubiquitously expressed, has been detected in lung, placenta, small intestine, liver, kidney, spleen, thymus, colon, muscle, heart and brain. Expressed in peripheral blood mononuclear cells (at protein level).

Its subcellular location is the cytoplasm. The protein localises to the nucleus. Functionally, transcription coactivator that associates with the serum response factor (SRF) transcription factor to control expression of genes regulating the cytoskeleton during development, morphogenesis and cell migration. The SRF-MRTFA complex activity responds to Rho GTPase-induced changes in cellular globular actin (G-actin) concentration, thereby coupling cytoskeletal gene expression to cytoskeletal dynamics. MRTFA binds G-actin via its RPEL repeats, regulating activity of the MRTFA-SRF complex. Activity is also regulated by filamentous actin (F-actin) in the nucleus. This Homo sapiens (Human) protein is Myocardin-related transcription factor A.